Here is a 274-residue protein sequence, read N- to C-terminus: Thiamine kinase (274 aa).

The protein belongs to the thiamine kinase family.

The catalysed reaction is thiamine + ATP = thiamine phosphate + ADP + H(+). It participates in cofactor biosynthesis; thiamine diphosphate biosynthesis; thiamine phosphate from thiamine: step 1/1. In terms of biological role, catalyzes the ATP-dependent phosphorylation of thiamine to thiamine phosphate. Is involved in thiamine salvage. The chain is Thiamine kinase from Salmonella heidelberg (strain SL476).